Here is a 168-residue protein sequence, read N- to C-terminus: Ribosome maturation factor RimM (168 aa).

In terms of domain architecture, PRC barrel spans 95 to 166 (EHEFYYSDII…RIQITPMEGL (72 aa)).

This sequence belongs to the RimM family. In terms of assembly, binds ribosomal protein uS19.

Its subcellular location is the cytoplasm. In terms of biological role, an accessory protein needed during the final step in the assembly of 30S ribosomal subunit, possibly for assembly of the head region. Essential for efficient processing of 16S rRNA. May be needed both before and after RbfA during the maturation of 16S rRNA. It has affinity for free ribosomal 30S subunits but not for 70S ribosomes. The protein is Ribosome maturation factor RimM of Staphylococcus saprophyticus subsp. saprophyticus (strain ATCC 15305 / DSM 20229 / NCIMB 8711 / NCTC 7292 / S-41).